The following is a 154-amino-acid chain: Large ribosomal subunit protein uL23 (154 aa).

The protein belongs to the universal ribosomal protein uL23 family.

Functionally, this protein binds to a specific region on the 26S rRNA. The polypeptide is Large ribosomal subunit protein uL23 (RPL23A) (Fritillaria agrestis (Stinkbells)).